Reading from the N-terminus, the 380-residue chain is Probable tRNA sulfurtransferase (380 aa).

Residues 58–162 (EEVIERLKKV…MAFVYAGVIE (105 aa)) enclose the THUMP domain. ATP is bound by residues 178–179 (LL), 203–204 (YF), Arg-260, Gly-282, and Gln-291.

It belongs to the ThiI family.

Its subcellular location is the cytoplasm. The catalysed reaction is [ThiI sulfur-carrier protein]-S-sulfanyl-L-cysteine + a uridine in tRNA + 2 reduced [2Fe-2S]-[ferredoxin] + ATP + H(+) = [ThiI sulfur-carrier protein]-L-cysteine + a 4-thiouridine in tRNA + 2 oxidized [2Fe-2S]-[ferredoxin] + AMP + diphosphate. The enzyme catalyses [ThiS sulfur-carrier protein]-C-terminal Gly-Gly-AMP + S-sulfanyl-L-cysteinyl-[cysteine desulfurase] + AH2 = [ThiS sulfur-carrier protein]-C-terminal-Gly-aminoethanethioate + L-cysteinyl-[cysteine desulfurase] + A + AMP + 2 H(+). The protein operates within cofactor biosynthesis; thiamine diphosphate biosynthesis. Catalyzes the ATP-dependent transfer of a sulfur to tRNA to produce 4-thiouridine in position 8 of tRNAs, which functions as a near-UV photosensor. Also catalyzes the transfer of sulfur to the sulfur carrier protein ThiS, forming ThiS-thiocarboxylate. This is a step in the synthesis of thiazole, in the thiamine biosynthesis pathway. The sulfur is donated as persulfide by IscS. In Thermoanaerobacter pseudethanolicus (strain ATCC 33223 / 39E) (Clostridium thermohydrosulfuricum), this protein is Probable tRNA sulfurtransferase.